A 121-amino-acid chain; its full sequence is DNA-directed RNA polymerase subunit Rpo8 (121 aa).

The protein belongs to the archaeal Rpo8 RNA polymerase subunit family. As to quaternary structure, part of the 13-subunit RNA polymerase complex. Post-translationally, this subunit is phosphorylated.

The protein resides in the cytoplasm. It catalyses the reaction RNA(n) + a ribonucleoside 5'-triphosphate = RNA(n+1) + diphosphate. DNA-dependent RNA polymerase (RNAP) catalyzes the transcription of DNA into RNA using the four ribonucleoside triphosphates as substrates. The chain is DNA-directed RNA polymerase subunit Rpo8 from Sulfolobus acidocaldarius (strain ATCC 33909 / DSM 639 / JCM 8929 / NBRC 15157 / NCIMB 11770).